Consider the following 434-residue polypeptide: MPQFLDTRRPGFEADFTALLGMKREDSPDVDAVVAGIIADVRARGDAAVIELTARFDRLELTPERLAFSEAEIEAEIATVSAEDRAALELAAERIRAYHARQMPENARWTDAAGAELGWRWGPIASAGLYVPGGLASYPSSVLMNAIPARVAGVERLVVACPTPGGVVNPLVLLAARLAGVDAVYRIGGAQAVAALAYGTETIRPVDKITGPGNAYVAAAKRRVFGRVGIDMIAGPSEILVIAEGAVDPDWIALDLLSQAEHDESAQSILVTPDEALGRAVVQAVEARLETLERRAIAGASWRDYGAVIVTRDLEEAAALSDRVAPEHLELCVADPEALAARIRHAGAIFLGGWTPEAIGDYVGGPNHVLPTARSARFSSGLSVMDFLKRTTLARMTPAALRAVGPAAERLAISESLEAHGLSVRARLDRLNEG.

NAD(+) is bound by residues Tyr130, Gln191, and Asn214. Substrate-binding residues include Ser237, Gln259, and His262. Zn(2+) contacts are provided by Gln259 and His262. Catalysis depends on proton acceptor residues Glu327 and His328. Substrate contacts are provided by His328, Asp361, Glu415, and His420. Zn(2+) is bound at residue Asp361. His420 lines the Zn(2+) pocket.

Belongs to the histidinol dehydrogenase family. Zn(2+) serves as cofactor.

It carries out the reaction L-histidinol + 2 NAD(+) + H2O = L-histidine + 2 NADH + 3 H(+). It functions in the pathway amino-acid biosynthesis; L-histidine biosynthesis; L-histidine from 5-phospho-alpha-D-ribose 1-diphosphate: step 9/9. Functionally, catalyzes the sequential NAD-dependent oxidations of L-histidinol to L-histidinaldehyde and then to L-histidine. This is Histidinol dehydrogenase from Cereibacter sphaeroides (strain ATCC 17023 / DSM 158 / JCM 6121 / CCUG 31486 / LMG 2827 / NBRC 12203 / NCIMB 8253 / ATH 2.4.1.) (Rhodobacter sphaeroides).